Reading from the N-terminus, the 177-residue chain is Large ribosomal subunit protein uL6 (177 aa).

It belongs to the universal ribosomal protein uL6 family. As to quaternary structure, part of the 50S ribosomal subunit.

In terms of biological role, this protein binds to the 23S rRNA, and is important in its secondary structure. It is located near the subunit interface in the base of the L7/L12 stalk, and near the tRNA binding site of the peptidyltransferase center. The sequence is that of Large ribosomal subunit protein uL6 from Hahella chejuensis (strain KCTC 2396).